The sequence spans 277 residues: Large ribosomal subunit protein uL2 (277 aa).

Residues 219-277 (TVRGSVMNPNDHPHGGGEGRSPIGHPSPRTPWGKPALGYKTRKNKKYSDRFIVKRRHDK) form a disordered region.

This sequence belongs to the universal ribosomal protein uL2 family. As to quaternary structure, part of the 50S ribosomal subunit. Forms a bridge to the 30S subunit in the 70S ribosome.

One of the primary rRNA binding proteins. Required for association of the 30S and 50S subunits to form the 70S ribosome, for tRNA binding and peptide bond formation. It has been suggested to have peptidyltransferase activity; this is somewhat controversial. Makes several contacts with the 16S rRNA in the 70S ribosome. The sequence is that of Large ribosomal subunit protein uL2 from Clostridium botulinum (strain Okra / Type B1).